The following is a 225-amino-acid chain: Ribose-5-phosphate isomerase A (225 aa).

Substrate-binding positions include threonine 26 to threonine 29, aspartate 82 to aspartate 85, and lysine 95 to glycine 98. Residue glutamate 104 is the Proton acceptor of the active site. Lysine 122 serves as a coordination point for substrate.

It belongs to the ribose 5-phosphate isomerase family. As to quaternary structure, homodimer.

It catalyses the reaction aldehydo-D-ribose 5-phosphate = D-ribulose 5-phosphate. The protein operates within carbohydrate degradation; pentose phosphate pathway; D-ribose 5-phosphate from D-ribulose 5-phosphate (non-oxidative stage): step 1/1. Functionally, catalyzes the reversible conversion of ribose-5-phosphate to ribulose 5-phosphate. The sequence is that of Ribose-5-phosphate isomerase A from Streptococcus sanguinis (strain SK36).